We begin with the raw amino-acid sequence, 209 residues long: Large ribosomal subunit protein uL3 (209 aa).

Glutamine 150 carries the N5-methylglutamine modification.

Belongs to the universal ribosomal protein uL3 family. As to quaternary structure, part of the 50S ribosomal subunit. Forms a cluster with proteins L14 and L19. Methylated by PrmB.

Its function is as follows. One of the primary rRNA binding proteins, it binds directly near the 3'-end of the 23S rRNA, where it nucleates assembly of the 50S subunit. The sequence is that of Large ribosomal subunit protein uL3 from Salmonella arizonae (strain ATCC BAA-731 / CDC346-86 / RSK2980).